The sequence spans 954 residues: MKILFNNTFELFCLFVFVTWALFLNNNGILYPVHCLKSAGDTYVDTLRGSNFNNEFIDLLSTRDICNTIKNYITREQIKCAISYDVLNISNIINSLEKTLLRDHNIIINGKEDILKKYLNTFLTLYIKRQSEDVNNFIKKFSNSKLDVVINYRYYEEKFLSEYEEIDSLKKGFSNHISEIKDILNNISSSNNYKKKSGVIYFPDVKETLYSKIQILKEILCKLRNKVSFMYNINFALDEFKENFDKQVYNFKGKEGLNDFVRITSDITNPTSTFTNVVDINKFNVNTQMDEIQNGTLSKEHLNDFRRNIINLDVHIRDPSSFCVNQVENPTEMNINNPCNNNDGNNINCKDLVEEDAMLNHFSFLLHHLEKMTCILIFSLKNKISSARDDIQKDINKMESELINVSNEINRLDIVVDVPQHHILNYHNKNENKVFNLMNIKNEYYEYLGGHNKINNNFDDFDNTLMLLERKTNWIKDQNIMTYGDREDIHEAISSTLEMIDKLKDMYVTENFNLLITYENLYKEINLFLYNKQYNISEEAYIYAWNSLENFKGKKLLTEGIDRLLGSVMSISYVIKYVKVANKHLNPQICFNLNKLSNAFMNIEEKLVLYRNQFYRLNHDITTLKLFKNNIEKLGYAYRDNMNKVHINMDTYNIATENLQHEIDNILENISDVLYEDMLINELKTMRATWKNFVYVKYDYFKQNNKLIEEFDENKLIIFPPQFGLMKQSEQTNIRNDNNNNNNNNNNNSNNNNNNNNNNKDNSVASLGSSILTRTSSPDNYLIGQNFIKSPYYNLLYEFATEKINCAKTPEERIKSFGEIYRTIDRVSSVIKENRKNLRSKYDNMRIEILKLIDYRKHTFEETKDVHKELIRLEGFILNTLDNLFAKRMTLSVQMKNSVEMLKGSLYKDKLPDYCKAVEMFIPKYFLTMTRWRNFLLEYRKIMPSRVISKFYST.

An N-terminal signal peptide occupies residues 1 to 35 (MKILFNNTFELFCLFVFVTWALFLNNNGILYPVHC). A coiled-coil region spans residues 381-415 (KNKISSARDDIQKDINKMESELINVSNEINRLDIV). Positions 733 to 765 (NIRNDNNNNNNNNNNNSNNNNNNNNNNKDNSVA) are disordered. Residues 736–763 (NDNNNNNNNNNNNSNNNNNNNNNNKDNS) are compositionally biased toward low complexity.

This is an uncharacterized protein from Plasmodium falciparum (isolate 3D7).